We begin with the raw amino-acid sequence, 151 residues long: Transcriptional regulator MraZ (151 aa).

2 consecutive SpoVT-AbrB domains span residues 5–51 (AHEL…PVAE) and 81–124 (AEIL…GREQ).

This sequence belongs to the MraZ family. In terms of assembly, forms oligomers.

It is found in the cytoplasm. Its subcellular location is the nucleoid. In Neisseria gonorrhoeae (strain ATCC 700825 / FA 1090), this protein is Transcriptional regulator MraZ.